The primary structure comprises 313 residues: Olfactory receptor 8B2 (313 aa).

At 1–25 (MLARNNSLVTEFILAGLTDHPEFRQ) the chain is on the extracellular side. An N-linked (GlcNAc...) asparagine glycan is attached at asparagine 5. Residues 26 to 46 (PLFFLFLVIYIVTMVGNLGLI) form a helical membrane-spanning segment. Residues 47-54 (TLFGLNSH) are Cytoplasmic-facing. A helical transmembrane segment spans residues 55–75 (LHTPMYYFLFNLSFIDLCYSS). The Extracellular portion of the chain corresponds to 76 to 99 (VFTPKMLMNFVSKKNIISNVGCMT). A disulfide bond links cysteine 97 and cysteine 189. Residues 100–120 (RLFFFLFFVISECYMLTSMAY) form a helical membrane-spanning segment. Residues 121–139 (DRYVAICNPLLYKVTMSHQ) lie on the Cytoplasmic side of the membrane. A helical transmembrane segment spans residues 140–160 (VCSMLTFAAYIMGLAGATAHT). The Extracellular portion of the chain corresponds to 161-197 (GCMLRLTFCSANIINHYLCDILPLLQLSCTSTYVNEV). The chain crosses the membrane as a helical span at residues 198–217 (VVLIVVGTNITVPSCTILIS). At 218-237 (YVFIVTSILHIKSTQGRSKA) the chain is on the cytoplasmic side. The helical transmembrane segment at 238–258 (FSTCSSHVIALSLFFGSAAFM) threads the bilayer. The Extracellular segment spans residues 259–270 (YIKYSSGSMEQG). Residues 271–291 (KVSSVFYTNVVPMLNPLIYSL) form a helical membrane-spanning segment. The Cytoplasmic portion of the chain corresponds to 292–313 (RNKDVKVALRKALIKIQRRNIF).

This sequence belongs to the G-protein coupled receptor 1 family.

The protein resides in the cell membrane. Odorant receptor. This Homo sapiens (Human) protein is Olfactory receptor 8B2 (OR8B2).